A 314-amino-acid polypeptide reads, in one-letter code: DNA-directed RNA polymerase subunit alpha (314 aa).

An alpha N-terminal domain (alpha-NTD) region spans residues 1–228 (MIEIEKPRIE…EHLNIFVDLT (228 aa)). Positions 245–314 (KEKVLEMSIE…DLGLGLRKED (70 aa)) are alpha C-terminal domain (alpha-CTD).

This sequence belongs to the RNA polymerase alpha chain family. In terms of assembly, homodimer. The RNAP catalytic core consists of 2 alpha, 1 beta, 1 beta' and 1 omega subunit. When a sigma factor is associated with the core the holoenzyme is formed, which can initiate transcription.

It catalyses the reaction RNA(n) + a ribonucleoside 5'-triphosphate = RNA(n+1) + diphosphate. DNA-dependent RNA polymerase catalyzes the transcription of DNA into RNA using the four ribonucleoside triphosphates as substrates. In Macrococcus caseolyticus (strain JCSC5402) (Macrococcoides caseolyticum), this protein is DNA-directed RNA polymerase subunit alpha.